A 101-amino-acid polypeptide reads, in one-letter code: NAD(P)H-quinone oxidoreductase subunit 4L, chloroplastic (101 aa).

3 consecutive transmembrane segments (helical) span residues 2–22 (MLEH…YGLI), 32–52 (MCLE…SDFF), and 61–81 (ILSI…LAIV).

This sequence belongs to the complex I subunit 4L family. NDH is composed of at least 16 different subunits, 5 of which are encoded in the nucleus.

Its subcellular location is the plastid. It localises to the chloroplast thylakoid membrane. The enzyme catalyses a plastoquinone + NADH + (n+1) H(+)(in) = a plastoquinol + NAD(+) + n H(+)(out). It catalyses the reaction a plastoquinone + NADPH + (n+1) H(+)(in) = a plastoquinol + NADP(+) + n H(+)(out). In terms of biological role, NDH shuttles electrons from NAD(P)H:plastoquinone, via FMN and iron-sulfur (Fe-S) centers, to quinones in the photosynthetic chain and possibly in a chloroplast respiratory chain. The immediate electron acceptor for the enzyme in this species is believed to be plastoquinone. Couples the redox reaction to proton translocation, and thus conserves the redox energy in a proton gradient. In Buxus microphylla (Littleleaf boxwood), this protein is NAD(P)H-quinone oxidoreductase subunit 4L, chloroplastic.